The following is a 1036-amino-acid chain: Presequence protease, mitochondrial (1036 aa).

The transit peptide at 1 to 15 directs the protein to the mitochondrion; that stretch reads MWRFSGRRGLCAVQR. His-104 contributes to the Zn(2+) binding site. The active-site Proton acceptor is the Glu-107. Zn(2+) is bound by residues His-108 and Glu-205. Residues Cys-119 and Cys-556 are joined by a disulfide bond. Position 759 is an N6-acetyllysine (Lys-759). At Lys-770 the chain carries N6-acetyllysine; alternate. The residue at position 770 (Lys-770) is an N6-succinyllysine; alternate. The interval 806-833 is disordered; that stretch reads SKKERKPVRPHIVEKPTPSGPSGAAHVS. Lys-848 carries the N6-succinyllysine modification. Residue Lys-883 is modified to N6-acetyllysine. The residue at position 945 (Lys-945) is an N6-succinyllysine.

This sequence belongs to the peptidase M16 family. PreP subfamily. Monomer and homodimer; homodimerization is induced by binding of the substrate. Zn(2+) is required as a cofactor. A disulfide bond locks the enzyme in the closed conformation preventing substrate entry into the catalytic chamber.

It is found in the mitochondrion matrix. Its activity is regulated as follows. Mainly exists in a closed and catalytically competent conformation but a closed-to-open switch allows substrate entry into the catalytic chamber. Substrate binding induces closure and dimerization. A disulfide bond may lock the enzyme in a closed conformation preventing substrate entry into the catalytic chamber, participating in redox regulation of the enzyme. Inhibited by metal-chelating agents. Inhibited by nickel and zinc excess, and slightly activated by manganese. Functionally, metalloendopeptidase of the mitochondrial matrix that functions in peptide cleavage and degradation rather than in protein processing. Has an ATP-independent activity. Specifically cleaves peptides in the range of 5 to 65 residues. Shows a preference for cleavage after small polar residues and before basic residues, but without any positional preference. Degrades the transit peptides of mitochondrial proteins after their cleavage. Also degrades other unstructured peptides. It is also able to degrade amyloid-beta protein 40, one of the peptides produced by APP processing, when it accumulates in mitochondrion. It is a highly efficient protease, at least toward amyloid-beta protein 40. Cleaves that peptide at a specific position and is probably not processive, releasing digested peptides intermediates that can be further cleaved subsequently. It is also able to degrade amyloid-beta protein 42. The chain is Presequence protease, mitochondrial from Mus musculus (Mouse).